The primary structure comprises 261 residues: MRPRAPGPLWPLPWGALAWAVGFVGSLGSGDPAPGGVCWLQQGREATCSLVLKTDVSQAECCASGNIDTAWSNFTHPGNKISLLGFLGLVHCLPCKDSCEGVECGPGKACRMLGGRPRCECAPDCTGLPARLQVCGSDGATYRDECELRAARCRGHPDLRVMYRGRCRKSCAHVVCLRPQSCVVDQTGSAHCVVCRAAPCPAPSSPGQELCGNNNVTYLSSCHLRQATCFLGRSIGVRHPGSCAGTPEPLDPESEEEENFV.

An N-terminal signal peptide occupies residues 1 to 26 (MRPRAPGPLWPLPWGALAWAVGFVGS). Positions 36–107 (GVCWLQQGRE…SCEGVECGPG (72 aa)) constitute a TB domain. 8 disulfides stabilise this stretch: cysteine 38–cysteine 61, cysteine 48–cysteine 92, cysteine 62–cysteine 95, cysteine 99–cysteine 110, cysteine 104–cysteine 119, cysteine 121–cysteine 153, cysteine 125–cysteine 146, and cysteine 135–cysteine 167. A glycan (N-linked (GlcNAc...) asparagine) is linked at asparagine 73. The 21-residue stretch at 99–119 (CEGVECGPGKACRMLGGRPRC) folds into the Follistatin-like 1 domain. Kazal-like domains follow at residues 113–169 (LGGR…RCRK) and 189–245 (SAHC…SCAG). In terms of domain architecture, Follistatin-like 2 spans 170 to 193 (SCAHVVCLRPQSCVVDQTGSAHCV). 3 disulfides stabilise this stretch: cysteine 195–cysteine 229, cysteine 200–cysteine 222, and cysteine 211–cysteine 243. A glycan (N-linked (GlcNAc...) asparagine) is linked at asparagine 215. Residues 242 to 261 (SCAGTPEPLDPESEEEENFV) form a disordered region. Residues 250 to 261 (LDPESEEEENFV) show a composition bias toward acidic residues.

As to quaternary structure, interacts with INHBA and INHBB. Interacts with FN1. Interacts with ADAM12. Interacts with MLLT10; the interaction enhances MLLT10 in vitro transcriptional activity and self-association. Interacts with MSTN.

Its subcellular location is the secreted. The protein localises to the nucleus. Its function is as follows. The secreted form is a binding and antagonizing protein for members of the TGF-beta family, such as activin, BMP2 and MSTN. Inhibits activin A-, activin B-, BMP2- and MSDT-induced cellular signaling; more effective on activin A than on activin B. Involved in bone formation; inhibits osteoclast differentiation. Involved in hematopoiesis; involved in differentiation of hemopoietic progenitor cells, increases hematopoietic cell adhesion to fibronectin and seems to contribute to the adhesion of hematopoietic precursor cells to the bone marrow stroma. The nuclear form is probably involved in transcriptional regulation via interaction with MLLT10. The sequence is that of Follistatin-related protein 3 (FSTL3) from Bos taurus (Bovine).